Reading from the N-terminus, the 114-residue chain is UPF0342 protein SSP0954 (114 aa).

This sequence belongs to the UPF0342 family.

This Staphylococcus saprophyticus subsp. saprophyticus (strain ATCC 15305 / DSM 20229 / NCIMB 8711 / NCTC 7292 / S-41) protein is UPF0342 protein SSP0954.